The chain runs to 91 residues: DNA-directed RNA polymerase subunit omega (91 aa).

The protein belongs to the RNA polymerase subunit omega family. As to quaternary structure, the RNAP catalytic core consists of 2 alpha, 1 beta, 1 beta' and 1 omega subunit. When a sigma factor is associated with the core the holoenzyme is formed, which can initiate transcription.

The enzyme catalyses RNA(n) + a ribonucleoside 5'-triphosphate = RNA(n+1) + diphosphate. Functionally, promotes RNA polymerase assembly. Latches the N- and C-terminal regions of the beta' subunit thereby facilitating its interaction with the beta and alpha subunits. This Edwardsiella ictaluri (strain 93-146) protein is DNA-directed RNA polymerase subunit omega.